The chain runs to 73 residues: Tetrahydromethanopterin S-methyltransferase subunit F (73 aa).

Residues 52 to 72 (IGFAAGFLFSLLMVIVLPLLF) traverse the membrane as a helical segment.

Belongs to the MtrF family. As to quaternary structure, the complex is composed of 8 subunits; MtrA, MtrB, MtrC, MtrD, MtrE, MtrF, MtrG and MtrH.

The protein resides in the cell membrane. It catalyses the reaction 5-methyl-5,6,7,8-tetrahydromethanopterin + coenzyme M + 2 Na(+)(in) = 5,6,7,8-tetrahydromethanopterin + methyl-coenzyme M + 2 Na(+)(out). It functions in the pathway one-carbon metabolism; methanogenesis from CO(2); methyl-coenzyme M from 5,10-methylene-5,6,7,8-tetrahydromethanopterin: step 2/2. In terms of biological role, part of a complex that catalyzes the formation of methyl-coenzyme M and tetrahydromethanopterin from coenzyme M and methyl-tetrahydromethanopterin. This is an energy-conserving, sodium-ion translocating step. The chain is Tetrahydromethanopterin S-methyltransferase subunit F from Methanosarcina barkeri (strain Fusaro / DSM 804).